The sequence spans 90 residues: Acylphosphatase (90 aa).

Residues 4 to 90 (RMYVKVYGIV…KGEFNNFDTY (87 aa)) enclose the Acylphosphatase-like domain. Residues arginine 19 and asparagine 37 contribute to the active site.

The protein belongs to the acylphosphatase family.

The catalysed reaction is an acyl phosphate + H2O = a carboxylate + phosphate + H(+). This Sulfurisphaera tokodaii (strain DSM 16993 / JCM 10545 / NBRC 100140 / 7) (Sulfolobus tokodaii) protein is Acylphosphatase (acyP).